The primary structure comprises 95 residues: DNA-directed RNA polymerase subunit Rpo11 (95 aa).

It belongs to the archaeal Rpo11/eukaryotic RPB11/RPC19 RNA polymerase subunit family. In terms of assembly, part of the RNA polymerase complex.

The protein localises to the cytoplasm. It carries out the reaction RNA(n) + a ribonucleoside 5'-triphosphate = RNA(n+1) + diphosphate. Its function is as follows. DNA-dependent RNA polymerase (RNAP) catalyzes the transcription of DNA into RNA using the four ribonucleoside triphosphates as substrates. This Thermococcus onnurineus (strain NA1) protein is DNA-directed RNA polymerase subunit Rpo11.